The chain runs to 133 residues: ATP synthase epsilon chain (133 aa).

The protein belongs to the ATPase epsilon chain family. As to quaternary structure, F-type ATPases have 2 components, CF(1) - the catalytic core - and CF(0) - the membrane proton channel. CF(1) has five subunits: alpha(3), beta(3), gamma(1), delta(1), epsilon(1). CF(0) has three main subunits: a, b and c.

The protein localises to the cell inner membrane. Produces ATP from ADP in the presence of a proton gradient across the membrane. The polypeptide is ATP synthase epsilon chain (Desulfosudis oleivorans (strain DSM 6200 / JCM 39069 / Hxd3) (Desulfococcus oleovorans)).